Reading from the N-terminus, the 170-residue chain is NADH-quinone oxidoreductase subunit B (170 aa).

Residues cysteine 37, cysteine 38, cysteine 102, and cysteine 131 each contribute to the [4Fe-4S] cluster site.

This sequence belongs to the complex I 20 kDa subunit family. In terms of assembly, NDH-1 is composed of 14 different subunits. Subunits NuoB, C, D, E, F, and G constitute the peripheral sector of the complex. [4Fe-4S] cluster is required as a cofactor.

It localises to the cell inner membrane. It catalyses the reaction a quinone + NADH + 5 H(+)(in) = a quinol + NAD(+) + 4 H(+)(out). Functionally, NDH-1 shuttles electrons from NADH, via FMN and iron-sulfur (Fe-S) centers, to quinones in the respiratory chain. The immediate electron acceptor for the enzyme in this species is believed to be ubiquinone. Couples the redox reaction to proton translocation (for every two electrons transferred, four hydrogen ions are translocated across the cytoplasmic membrane), and thus conserves the redox energy in a proton gradient. This chain is NADH-quinone oxidoreductase subunit B, found in Citrifermentans bemidjiense (strain ATCC BAA-1014 / DSM 16622 / JCM 12645 / Bem) (Geobacter bemidjiensis).